The following is a 90-amino-acid chain: Putative toxin RelE1 (90 aa).

Belongs to the RelE toxin family.

Toxic component of a type II toxin-antitoxin (TA) system. Its cognate antitoxin is RelB1 (Potential). This chain is Putative toxin RelE1 (relE1), found in Methanocaldococcus jannaschii (strain ATCC 43067 / DSM 2661 / JAL-1 / JCM 10045 / NBRC 100440) (Methanococcus jannaschii).